A 302-amino-acid chain; its full sequence is Succinate--CoA ligase [ADP-forming] subunit alpha (302 aa).

Residues 17 to 20 (TGST), Lys43, and 96 to 98 (ITE) contribute to the CoA site. Tyr159 lines the substrate pocket. The active-site Tele-phosphohistidine intermediate is the His247.

The protein belongs to the succinate/malate CoA ligase alpha subunit family. As to quaternary structure, heterotetramer of two alpha and two beta subunits.

It catalyses the reaction succinate + ATP + CoA = succinyl-CoA + ADP + phosphate. It carries out the reaction GTP + succinate + CoA = succinyl-CoA + GDP + phosphate. The protein operates within carbohydrate metabolism; tricarboxylic acid cycle; succinate from succinyl-CoA (ligase route): step 1/1. In terms of biological role, succinyl-CoA synthetase functions in the citric acid cycle (TCA), coupling the hydrolysis of succinyl-CoA to the synthesis of either ATP or GTP and thus represents the only step of substrate-level phosphorylation in the TCA. The alpha subunit of the enzyme binds the substrates coenzyme A and phosphate, while succinate binding and nucleotide specificity is provided by the beta subunit. The sequence is that of Succinate--CoA ligase [ADP-forming] subunit alpha from Staphylococcus aureus (strain MSSA476).